A 162-amino-acid polypeptide reads, in one-letter code: Allophycocyanin subunit beta (162 aa).

An N4-methylasparagine modification is found at N72. Residue C82 participates in (2R,3E)-phycocyanobilin binding.

It belongs to the phycobiliprotein family. As to quaternary structure, heterohexamer of two alpha chains, one alpha-B chain and three beta chains. Post-translationally, contains one covalently linked phycocyanobilin chromophore. The chromophore is added by phycocyanobilin lyase CpcS 1.

The protein resides in the cellular thylakoid membrane. Functionally, light-harvesting photosynthetic bile pigment-protein from the phycobiliprotein complex. Allophycocyanin has a maximum absorption at approximately 650 to 653 nanometers. This chain is Allophycocyanin subunit beta (apcB), found in Nostoc sp. (strain PCC 7120 / SAG 25.82 / UTEX 2576).